Reading from the N-terminus, the 620-residue chain is uncharacterized protein (620 aa).

It belongs to the chlamydial CPn_0512/CT_425/TC_0708 family.

This is an uncharacterized protein from Chlamydia pneumoniae (Chlamydophila pneumoniae).